Consider the following 282-residue polypeptide: sn-glycerol-3-phosphate transport system permease protein UgpE (282 aa).

The next 6 helical transmembrane spans lie at 14-34 (LILILGIIIVAFPIYYTFVAS), 86-106 (MAIAVGKIIISFMSAFAIVFF), 112-132 (MFFFWMIFITLMLPVEVRILP), 146-168 (YAGLTLPLMASATATFLFRQFFL), 201-221 (IAALFVILFIYGWTQYLWPLL), and 248-268 (WNYVMVTAILAIIPPILVVVL). In terms of domain architecture, ABC transmembrane type-1 spans 78 to 269 (LWNSFVVAMA…IPPILVVVLM (192 aa)).

It belongs to the binding-protein-dependent transport system permease family. In terms of assembly, the complex is composed of two ATP-binding proteins (UgpC), two transmembrane proteins (UgpA and UgpE) and a solute-binding protein (UgpB).

Its subcellular location is the cell inner membrane. Functionally, part of the ABC transporter complex UgpBAEC involved in sn-glycerol-3-phosphate (G3P) import. Probably responsible for the translocation of the substrate across the membrane. This Brucella melitensis biotype 1 (strain ATCC 23456 / CCUG 17765 / NCTC 10094 / 16M) protein is sn-glycerol-3-phosphate transport system permease protein UgpE (ugpE).